The sequence spans 565 residues: Adenine deaminase (565 aa).

This sequence belongs to the metallo-dependent hydrolases superfamily. Adenine deaminase family. The cofactor is Mn(2+).

The catalysed reaction is adenine + H2O + H(+) = hypoxanthine + NH4(+). The polypeptide is Adenine deaminase (Cereibacter sphaeroides (strain ATCC 17023 / DSM 158 / JCM 6121 / CCUG 31486 / LMG 2827 / NBRC 12203 / NCIMB 8253 / ATH 2.4.1.) (Rhodobacter sphaeroides)).